The primary structure comprises 304 residues: MQPIRLGLVGYGKIAQDQHVPAINANPAFTLVSVATQGKPCPGVENFQSLGELLENGPPVDAIAFCTPPQGRFALVQQALAAGKHVLVEKPPCATLGKAALWIKREQASAPCSPCIAYAPAIAAARDWLATRTLQSVQIDWKEDVRKWHPGQAWIWQPGLGVFDPGINALSIVTHLLPLPLFVESAELRVPSNCQSPIAASIKMSDPRLLDVRAEFDFDHGHDELWSIQIRCAEGTLRLDNGGALLSIDGVRQTVAEEGEYAAVYRHFQQLIGDKTSDVDVQPLRLVADSFFVGSRVSVEAFYD.

This sequence belongs to the Gfo/Idh/MocA family. As to quaternary structure, homodimer.

The protein resides in the cytoplasm. It carries out the reaction D-galactose + NAD(+) = D-galactono-1,4-lactone + NADH + H(+). It functions in the pathway carbohydrate metabolism; galactose metabolism. Catalyzes the dehydrogenation of D-galactose by either NAD(+) or NADP(+). Oxidizes following sugars in decreasing order: D-fucose &gt; D-galactose &gt; L-arabinose &gt; 2-deoxy-D-galactose &gt;&gt; 4-deoxy-D-galactose &gt; 2-deoxy-2-amino-D-galactose. In Pseudomonas fluorescens, this protein is Galactose 1-dehydrogenase (gal).